The following is a 510-amino-acid chain: Calcium-dependent lipid-binding protein (510 aa).

Residues 1–21 (MGLISGILFGIIFGVALMAGW) form a helical membrane-spanning segment. SMP-LTD domains follow at residues 66–248 (AFEQ…VPIG) and 66–250 (AFEQ…IGGI). Residues 226–488 (DDTVDTIVKD…FMGRTITGQS (263 aa)) are phospholipid binding. 2 C2 domains span residues 242–362 (RIVV…ELEL) and 246–364 (PIGG…ELNL). 8 residues coordinate Ca(2+): lysine 278, glutamate 279, aspartate 285, aspartate 333, lysine 334, aspartate 335, aspartate 339, and glutamate 340. A coiled-coil region spans residues 390–417 (EFNKEEQMAALEDEKKIMEERKRLKEAG). Residues 461-500 (MVGSGFGAVGSGLSKAGRFMGRTITGQSSKRSGSSTPVNT) form the C2 3 domain. Positions 484-510 (ITGQSSKRSGSSTPVNTVPENDGAKQQ) are disordered.

It belongs to the synaptotagmin family. As to quaternary structure, interacts with the biotrophic pathogenic fungi Microbotryum violaceum effector MVLG_01732. The cofactor is Ca(2+). In terms of tissue distribution, mostly expressed in rosette leaves and flowers, to lower extent, in cauline leaves, roots and stems, and, at low levels, in siliques.

The protein localises to the nucleus membrane. May be involved in membrane trafficking. Acts as a repressor of abiotic stress (e.g. drought and salt) responses by binding specifically to the promoter of THAS1 to regulate its transcription. Binds to membrane lipid ceramides. The chain is Calcium-dependent lipid-binding protein from Arabidopsis thaliana (Mouse-ear cress).